A 234-amino-acid polypeptide reads, in one-letter code: Conidial surface nicotinamide adenine dinucleotide glycohydrolase nadA (234 aa).

The N-terminal stretch at 1-20 (MIFTNAILVISALLPATVLS) is a signal peptide. The segment at 21-117 (LQHTEDSLFP…LDTEEQPILG (97 aa)) is thump. 2 disulfides stabilise this stretch: Cys-33–Cys-80 and Cys-38–Cys-50. N-linked (GlcNAc...) asparagine glycosylation is found at Asn-45, Asn-95, and Asn-118. In terms of domain architecture, TNT spans 120–212 (TLPVGMKLDR…GLIDDGYLRR (93 aa)). Arg-129 is an active-site residue. Positions 130, 136, and 148 each coordinate NAD(+). The active site involves Gln-194. Positions 216, 219, 220, and 223 each coordinate Ca(2+).

The protein belongs to the fungal surface NADase family. As to quaternary structure, homodimer. In terms of processing, N-glycosylated.

The protein localises to the secreted. The enzyme catalyses NAD(+) + H2O = ADP-D-ribose + nicotinamide + H(+). It carries out the reaction NADP(+) + H2O = ADP-D-ribose 2'-phosphate + nicotinamide + H(+). With respect to regulation, the catalytic activity is positively regulated by calcium via its binding to the calcium-binding site. Its function is as follows. Conidial surface nicotinamide adenine dinucleotide glycohydrolase that cleave NAD(+) and NADP(+) but not their reduced counterparts, NADH and NADPH. Lacks both ADP-ribosyl cyclase and base exchange activity and does not mediate synthesis of calcium messengers cADPR or NAADP. Plays a role in pathogenicity by depleting the host's NAD(+) pool. In Aspergillus fumigatus (strain ATCC MYA-4609 / CBS 101355 / FGSC A1100 / Af293) (Neosartorya fumigata), this protein is Conidial surface nicotinamide adenine dinucleotide glycohydrolase nadA.